The following is a 292-amino-acid chain: tRNA pseudouridine synthase B (292 aa).

D40 serves as the catalytic Nucleophile.

This sequence belongs to the pseudouridine synthase TruB family. Type 1 subfamily.

The enzyme catalyses uridine(55) in tRNA = pseudouridine(55) in tRNA. Responsible for synthesis of pseudouridine from uracil-55 in the psi GC loop of transfer RNAs. This Mycoplasma mycoides subsp. mycoides SC (strain CCUG 32753 / NCTC 10114 / PG1) protein is tRNA pseudouridine synthase B.